We begin with the raw amino-acid sequence, 544 residues long: Calcium-dependent protein kinase 6 (544 aa).

The disordered stretch occupies residues 1–47 (MGNSCRGSFKDKIYEGNHSRPEENSKSTTTTVSSVHSPTTDQDFSKQ). Gly-2 carries the N-myristoyl glycine lipid modification. Residues 8-25 (SFKDKIYEGNHSRPEENS) show a composition bias toward basic and acidic residues. Residues 26–40 (KSTTTTVSSVHSPTT) are compositionally biased toward low complexity. A Protein kinase domain is found at 85–343 (YTLSRKLGQG…AHEVLRHPWI (259 aa)). ATP-binding positions include 91-99 (LGQGQFGTT) and Lys-114. Asp-209 functions as the Proton acceptor in the catalytic mechanism. Ser-249 carries the post-translational modification Phosphoserine. Residues 349-379 (APDRALDPAVLSRLKQFSAMNKLKKMALKVI) form an autoinhibitory domain region. EF-hand domains are found at residues 386–421 (EEIAGLRAMFEAMDTDNSGAITFDELKAGLRRYGST), 422–457 (LKDTEIRDLMEAADVDNSGTIDYSEFIAATIHLNKL), 458–493 (EREEHLVSAFQYFDKDGSGYITIDELQQSCIEHGMT), and 497–527 (LEDIIKEVDQDNDGRIDYEEFVAMMQKGNAG). Ca(2+)-binding residues include Asp-399, Asp-401, Ser-403, Glu-410, Asp-435, Asp-437, Ser-439, Thr-441, Glu-446, Asp-471, Asp-473, Ser-475, Tyr-477, Glu-482, Asp-505, Asp-507, Asp-509, Arg-511, and Glu-516.

It belongs to the protein kinase superfamily. Ser/Thr protein kinase family. CDPK subfamily. As to quaternary structure, interacts with SLAC1. Interacts with FD. Expressed in both guard cells and mesophyll cells. Expressed in the shoot apical meristem.

The protein resides in the cell membrane. The protein localises to the nucleus. It carries out the reaction L-seryl-[protein] + ATP = O-phospho-L-seryl-[protein] + ADP + H(+). The enzyme catalyses L-threonyl-[protein] + ATP = O-phospho-L-threonyl-[protein] + ADP + H(+). With respect to regulation, activated by calcium. Autophosphorylation may play an important role in the regulation of the kinase activity. Its function is as follows. May play a role in signal transduction pathways that involve calcium as a second messenger. Functions in abscisic acid (ABA) regulation of guard cell S-type anion- and Ca(2+)-permeable channels and stomatal closure. Phosphorylates FD. This Arabidopsis thaliana (Mouse-ear cress) protein is Calcium-dependent protein kinase 6 (CPK6).